A 142-amino-acid polypeptide reads, in one-letter code: Protein spalt-accessory (142 aa).

A signal peptide spans 1–16 (MKLLIALFALVTAVNA). The interval 75-142 (GFAGQGSPNQ…HHEHHGHHRH (68 aa)) is disordered. Over residues 107 to 124 (GHFHENPHEYPEHHGDHH) the composition is skewed to basic and acidic residues. The span at 125–142 (REHHEHHGHHEHHGHHRH) shows a compositional bias: basic residues.

Its subcellular location is the secreted. Its function is as follows. Likely to be involved in the establishment of the head. This chain is Protein spalt-accessory (sala), found in Drosophila melanogaster (Fruit fly).